Consider the following 401-residue polypeptide: Argininosuccinate synthase (401 aa).

9 to 17 contacts ATP; it reads AYSGGLDTS. Tyr86 contacts L-citrulline. Residue Gly116 participates in ATP binding. The L-aspartate site is built by Thr118, Asn122, and Asp123. Asn122 is an L-citrulline binding site. The L-citrulline site is built by Arg126, Ser174, Ser183, Glu259, and Tyr271.

The protein belongs to the argininosuccinate synthase family. Type 1 subfamily. As to quaternary structure, homotetramer.

The protein localises to the cytoplasm. The enzyme catalyses L-citrulline + L-aspartate + ATP = 2-(N(omega)-L-arginino)succinate + AMP + diphosphate + H(+). It functions in the pathway amino-acid biosynthesis; L-arginine biosynthesis; L-arginine from L-ornithine and carbamoyl phosphate: step 2/3. The sequence is that of Argininosuccinate synthase from Bacillus cereus (strain AH187).